Reading from the N-terminus, the 282-residue chain is Acetylglutamate kinase (282 aa).

Residues 62-63 (GG), R84, and N178 contribute to the substrate site.

It belongs to the acetylglutamate kinase family. ArgB subfamily.

The protein resides in the cytoplasm. It catalyses the reaction N-acetyl-L-glutamate + ATP = N-acetyl-L-glutamyl 5-phosphate + ADP. It functions in the pathway amino-acid biosynthesis; L-arginine biosynthesis; N(2)-acetyl-L-ornithine from L-glutamate: step 2/4. Catalyzes the ATP-dependent phosphorylation of N-acetyl-L-glutamate. The polypeptide is Acetylglutamate kinase (Thermotoga neapolitana (strain ATCC 49049 / DSM 4359 / NBRC 107923 / NS-E)).